Consider the following 503-residue polypeptide: Potassium voltage-gated channel subfamily V member 1 (503 aa).

2 disordered regions span residues 1-20 (MDLSPRNRPLLDSSSLDSGS) and 171-192 (KKDTDDQESQHESEQDFSKGPC). Topologically, residues 3-213 (LSPRNRPLLD…EKPGSSTAAR (211 aa)) are cytoplasmic. A compositionally biased stretch (low complexity) spans 10 to 20 (LLDSSSLDSGS). Positions 171-187 (KKDTDDQESQHESEQDF) are enriched in basic and acidic residues. A helical transmembrane segment spans residues 214–234 (IFGVISIIFVAVSIVNMALMS). The Extracellular segment spans residues 235 to 241 (AELSWLN). A helical membrane pass occupies residues 242–262 (LQLLEILEYVCISWFTGEFVL). The Cytoplasmic segment spans residues 263-279 (RFLCVKDRCHFLRKVPN). The chain crosses the membrane as a helical span at residues 280–300 (IIDLLAILPFYITLLVESLSG). Residues 301 to 312 (SHTTQELENVGR) are Extracellular-facing. The helical; Voltage-sensor transmembrane segment at 313–334 (LVQVLRLLRALRMLKLGRHSTG) threads the bilayer. Topologically, residues 335–348 (LRSLGMTITQCYEE) are cytoplasmic. The chain crosses the membrane as a helical span at residues 349-369 (VGLLLLFLSVGISIFSTIEYF). The Selectivity filter motif lies at 395–400 (TVGYGD). The chain crosses the membrane as a helical span at residues 410–430 (IVAFMCILSGILVLALPIAII). The Cytoplasmic portion of the chain corresponds to 431-503 (NDRFSACYFT…RSSGGDDFWF (73 aa)).

This sequence belongs to the potassium channel family. V (TC 1.A.1.2) subfamily. Kv8.1/KCNV1 sub-subfamily. As to quaternary structure, heteromultimer with KCNB1 and KCNB2. Interacts with KCNC4 and KCND1.

The protein localises to the cell membrane. Functionally, potassium channel subunit that does not form functional channels by itself. Modulates KCNB1 and KCNB2 channel activity by shifting the threshold for inactivation to more negative values and by slowing the rate of inactivation. Can down-regulate the channel activity of KCNB1, KCNB2, KCNC4 and KCND1, possibly by trapping them in intracellular membranes. The chain is Potassium voltage-gated channel subfamily V member 1 (Kcnv1) from Mus musculus (Mouse).